The following is a 233-amino-acid chain: Probable GTP-binding protein EngB (233 aa).

The EngB-type G domain occupies 21 to 228 (GLPEVALVGR…WRWIREHVQD (208 aa)). GTP contacts are provided by residues 29–36 (GRSNVGKS) and 56–60 (GRTQA). Mg(2+) is bound by residues serine 36 and threonine 58. The disordered stretch occupies residues 68-87 (PQGKPRPEGEPQPDKDAGRT). Over residues 72-85 (PRPEGEPQPDKDAG) the composition is skewed to basic and acidic residues. GTP contacts are provided by residues 107–110 (DMPG), 174–177 (TKAD), and 207–209 (FSA).

This sequence belongs to the TRAFAC class TrmE-Era-EngA-EngB-Septin-like GTPase superfamily. EngB GTPase family. Mg(2+) serves as cofactor.

Its function is as follows. Necessary for normal cell division and for the maintenance of normal septation. The chain is Probable GTP-binding protein EngB from Symbiobacterium thermophilum (strain DSM 24528 / JCM 14929 / IAM 14863 / T).